Consider the following 139-residue polypeptide: Putative nickel-responsive regulator (139 aa).

Ni(2+) contacts are provided by His79, His90, His92, and Cys98.

The protein belongs to the transcriptional regulatory CopG/NikR family. Requires Ni(2+) as cofactor.

Its function is as follows. Transcriptional regulator. This chain is Putative nickel-responsive regulator, found in Anaeromyxobacter sp. (strain K).